A 347-amino-acid polypeptide reads, in one-letter code: NADH-ubiquinone oxidoreductase chain 2 (347 aa).

The next 11 membrane-spanning stretches (helical) occupy residues 1 to 21 (MNPL…MIVM), 25 to 45 (HWLT…PILM), 59 to 79 (YFLT…INLL), 96 to 116 (IIMT…FWVP), 122 to 142 (IQLS…MSIL), 145 to 165 (IFPT…VAIG), 178 to 198 (IMAY…AYNP), 201 to 221 (TLLN…MFML), 237 to 257 (APLL…LPPL), 276 to 296 (IITP…YMRL), and 326 to 346 (VSPL…LMLL).

The protein belongs to the complex I subunit 2 family. In terms of assembly, core subunit of respiratory chain NADH dehydrogenase (Complex I) which is composed of 45 different subunits. Interacts with TMEM242.

It is found in the mitochondrion inner membrane. It carries out the reaction a ubiquinone + NADH + 5 H(+)(in) = a ubiquinol + NAD(+) + 4 H(+)(out). Functionally, core subunit of the mitochondrial membrane respiratory chain NADH dehydrogenase (Complex I) which catalyzes electron transfer from NADH through the respiratory chain, using ubiquinone as an electron acceptor. Essential for the catalytic activity and assembly of complex I. The chain is NADH-ubiquinone oxidoreductase chain 2 from Boneia bidens (Manado fruit bat).